Consider the following 426-residue polypeptide: Glutamate-1-semialdehyde 2,1-aminomutase (426 aa).

Lys-265 is modified (N6-(pyridoxal phosphate)lysine).

It belongs to the class-III pyridoxal-phosphate-dependent aminotransferase family. HemL subfamily. As to quaternary structure, homodimer. The cofactor is pyridoxal 5'-phosphate.

The protein resides in the cytoplasm. It catalyses the reaction (S)-4-amino-5-oxopentanoate = 5-aminolevulinate. The protein operates within porphyrin-containing compound metabolism; protoporphyrin-IX biosynthesis; 5-aminolevulinate from L-glutamyl-tRNA(Glu): step 2/2. This chain is Glutamate-1-semialdehyde 2,1-aminomutase, found in Pseudoalteromonas translucida (strain TAC 125).